A 662-amino-acid polypeptide reads, in one-letter code: Glycogen debranching enzyme (662 aa).

Residue D338 is the Nucleophile of the active site. E373 serves as the catalytic Proton donor.

The protein belongs to the glycosyl hydrolase 13 family.

It catalyses the reaction Hydrolysis of (1-&gt;6)-alpha-D-glucosidic linkages to branches with degrees of polymerization of three or four glucose residues in limit dextrin.. It participates in glycan degradation; glycogen degradation. Removes maltotriose and maltotetraose chains that are attached by 1,6-alpha-linkage to the limit dextrin main chain, generating a debranched limit dextrin. This Yersinia pestis bv. Antiqua (strain Angola) protein is Glycogen debranching enzyme.